A 249-amino-acid polypeptide reads, in one-letter code: 2,3-bisphosphoglycerate-dependent phosphoglycerate mutase 2 (249 aa).

Substrate-binding positions include 8-15 (RHGESIWN), 21-22 (TG), R60, 87-90 (ERHY), K98, 114-115 (RR), and 183-184 (GN). Residue H9 is the Tele-phosphohistidine intermediate of the active site. The Proton donor/acceptor role is filled by E87.

It belongs to the phosphoglycerate mutase family. BPG-dependent PGAM subfamily. As to quaternary structure, homodimer.

It catalyses the reaction (2R)-2-phosphoglycerate = (2R)-3-phosphoglycerate. The protein operates within carbohydrate degradation; glycolysis; pyruvate from D-glyceraldehyde 3-phosphate: step 3/5. Catalyzes the interconversion of 2-phosphoglycerate and 3-phosphoglycerate. The chain is 2,3-bisphosphoglycerate-dependent phosphoglycerate mutase 2 from Nitrosomonas europaea (strain ATCC 19718 / CIP 103999 / KCTC 2705 / NBRC 14298).